The chain runs to 300 residues: Diphthine methyl ester synthase (300 aa).

Residues L9, D85, G88, 113–114 (SV), L164, L222, and H247 each bind S-adenosyl-L-methionine.

It belongs to the diphthine synthase family.

The protein resides in the cytoplasm. It catalyses the reaction 2-[(3S)-amino-3-carboxypropyl]-L-histidyl-[translation elongation factor 2] + 4 S-adenosyl-L-methionine = diphthine methyl ester-[translation elongation factor 2] + 4 S-adenosyl-L-homocysteine + 3 H(+). It functions in the pathway protein modification; peptidyl-diphthamide biosynthesis. Its function is as follows. S-adenosyl-L-methionine-dependent methyltransferase that catalyzes four methylations of the modified target histidine residue in translation elongation factor 2 (EF-2), to form an intermediate called diphthine methyl ester. The four successive methylation reactions represent the second step of diphthamide biosynthesis. This chain is Diphthine methyl ester synthase (DPH5), found in Yarrowia lipolytica (strain CLIB 122 / E 150) (Yeast).